The chain runs to 81 residues: Sulfur carrier protein TusA (81 aa).

The Cysteine persulfide intermediate role is filled by Cys19.

It belongs to the sulfur carrier protein TusA family. In terms of assembly, interacts with IscS.

It localises to the cytoplasm. The protein operates within tRNA modification. Sulfur carrier protein involved in sulfur trafficking in the cell. Part of a sulfur-relay system required for 2-thiolation during synthesis of 2-thiouridine of the modified wobble base 5-methylaminomethyl-2-thiouridine (mnm(5)s(2)U) in tRNA. Interacts with IscS and stimulates its cysteine desulfurase activity. Accepts an activated sulfur from IscS, which is then transferred to TusD, and thus determines the direction of sulfur flow from IscS to 2-thiouridine formation. Also appears to be involved in sulfur transfer for the biosynthesis of molybdopterin. The polypeptide is Sulfur carrier protein TusA (Klebsiella pneumoniae subsp. pneumoniae (strain ATCC 700721 / MGH 78578)).